An 823-amino-acid polypeptide reads, in one-letter code: Putative ankyrin repeat domain-containing protein 20A4 (823 aa).

ANK repeat units lie at residues 66–95 (QHRTALHLACASGHVQVVTLLVNRKCQIDV), 99–128 (ENRTPLIQAVHCQEEACAVILLEHGANPNL), 132–161 (YGNTALHYAVYSESTSLAEKLLSHGAHIEA), 165–194 (DNNTPLLFAIICKKEKMVEFLLKKKASSHA), and 198–227 (LRRSALMLAVYYDSPGIVNILLKQNIDVFA). Disordered stretches follow at residues 301–343 (VPEK…EVED) and 356–405 (QTLR…NICD). Positions 371–384 (EQQRHERSEKKQPQ) are enriched in basic and acidic residues. Coiled coils occupy residues 431–480 (KKLK…KQLE), 565–724 (EMIT…NNST), and 776–806 (FVLEEKSKKLMNECDHLKESLFQYEREKTEV).

This chain is Putative ankyrin repeat domain-containing protein 20A4, found in Homo sapiens (Human).